The primary structure comprises 98 residues: Integration host factor subunit alpha (98 aa).

A disordered region spans residues 52-71; it reads FDLRDKNQRPGRNPKTGEDI.

This sequence belongs to the bacterial histone-like protein family. Heterodimer of an alpha and a beta chain.

This protein is one of the two subunits of integration host factor, a specific DNA-binding protein that functions in genetic recombination as well as in transcriptional and translational control. In Photorhabdus laumondii subsp. laumondii (strain DSM 15139 / CIP 105565 / TT01) (Photorhabdus luminescens subsp. laumondii), this protein is Integration host factor subunit alpha.